A 287-amino-acid polypeptide reads, in one-letter code: 4-hydroxybenzoate octaprenyltransferase (287 aa).

Helical transmembrane passes span 23–40, 99–119, 141–161, 163–183, 213–233, 235–255, and 266–286; these read IGSL…WLAG, LFVV…TMTI, LPQF…YAAV, ESLP…TVAY, LIIG…GTMT, LGMP…YQQI, and FKAF…VLFG.

Belongs to the UbiA prenyltransferase family. Mg(2+) serves as cofactor.

The protein localises to the cell inner membrane. It carries out the reaction all-trans-octaprenyl diphosphate + 4-hydroxybenzoate = 4-hydroxy-3-(all-trans-octaprenyl)benzoate + diphosphate. It participates in cofactor biosynthesis; ubiquinone biosynthesis. In terms of biological role, catalyzes the prenylation of para-hydroxybenzoate (PHB) with an all-trans polyprenyl group. Mediates the second step in the final reaction sequence of ubiquinone-8 (UQ-8) biosynthesis, which is the condensation of the polyisoprenoid side chain with PHB, generating the first membrane-bound Q intermediate 3-octaprenyl-4-hydroxybenzoate. The sequence is that of 4-hydroxybenzoate octaprenyltransferase from Pectobacterium carotovorum subsp. carotovorum (strain PC1).